A 492-amino-acid chain; its full sequence is GTPase Der (492 aa).

EngA-type G domains follow at residues proline 3–valine 166 and isoleucine 205–threonine 378. Residues glycine 9 to serine 16, aspartate 56 to isoleucine 60, asparagine 118 to aspartate 121, glycine 211 to serine 218, aspartate 258 to valine 262, and asparagine 323 to aspartate 326 each bind GTP. One can recognise a KH-like domain in the interval arginine 379–glutamate 463.

Belongs to the TRAFAC class TrmE-Era-EngA-EngB-Septin-like GTPase superfamily. EngA (Der) GTPase family. As to quaternary structure, associates with the 50S ribosomal subunit.

In terms of biological role, GTPase that plays an essential role in the late steps of ribosome biogenesis. The polypeptide is GTPase Der (Klebsiella pneumoniae subsp. pneumoniae (strain ATCC 700721 / MGH 78578)).